A 143-amino-acid chain; its full sequence is Nucleoside diphosphate kinase (143 aa).

Positions 11, 59, 87, 93, 104, and 114 each coordinate ATP. H117 acts as the Pros-phosphohistidine intermediate in catalysis.

It belongs to the NDK family. In terms of assembly, homotetramer. Requires Mg(2+) as cofactor.

It localises to the cytoplasm. The enzyme catalyses a 2'-deoxyribonucleoside 5'-diphosphate + ATP = a 2'-deoxyribonucleoside 5'-triphosphate + ADP. The catalysed reaction is a ribonucleoside 5'-diphosphate + ATP = a ribonucleoside 5'-triphosphate + ADP. Functionally, major role in the synthesis of nucleoside triphosphates other than ATP. The ATP gamma phosphate is transferred to the NDP beta phosphate via a ping-pong mechanism, using a phosphorylated active-site intermediate. The sequence is that of Nucleoside diphosphate kinase from Pseudoalteromonas atlantica (strain T6c / ATCC BAA-1087).